Reading from the N-terminus, the 529-residue chain is Bifunctional purine biosynthesis protein PurH (529 aa).

The 148-residue stretch at 1–148 (MTNRNVIKNV…KNYKNVLVVT (148 aa)) folds into the MGS-like domain.

The protein belongs to the PurH family.

It carries out the reaction (6R)-10-formyltetrahydrofolate + 5-amino-1-(5-phospho-beta-D-ribosyl)imidazole-4-carboxamide = 5-formamido-1-(5-phospho-D-ribosyl)imidazole-4-carboxamide + (6S)-5,6,7,8-tetrahydrofolate. It catalyses the reaction IMP + H2O = 5-formamido-1-(5-phospho-D-ribosyl)imidazole-4-carboxamide. Its pathway is purine metabolism; IMP biosynthesis via de novo pathway; 5-formamido-1-(5-phospho-D-ribosyl)imidazole-4-carboxamide from 5-amino-1-(5-phospho-D-ribosyl)imidazole-4-carboxamide (10-formyl THF route): step 1/1. The protein operates within purine metabolism; IMP biosynthesis via de novo pathway; IMP from 5-formamido-1-(5-phospho-D-ribosyl)imidazole-4-carboxamide: step 1/1. This Buchnera aphidicola subsp. Baizongia pistaciae (strain Bp) protein is Bifunctional purine biosynthesis protein PurH.